Consider the following 349-residue polypeptide: Thiamine-phosphate synthase (349 aa).

Residues 1–125 (MGCESSLDPR…SAEAAAIRYG (125 aa)) are unknown. The interval 63–85 (RARSTVTDPGAGMEHPAQLDRHS) is disordered. Positions 126–349 (LYDLEVTCLT…LLSSLSRPTL (224 aa)) are thiamine-phosphate synthase. Residues 177–181 (QHRCK) and asparagine 209 each bind 4-amino-2-methyl-5-(diphosphooxymethyl)pyrimidine. Mg(2+) contacts are provided by aspartate 210 and aspartate 229. Residues serine 248 and lysine 277 each coordinate 4-amino-2-methyl-5-(diphosphooxymethyl)pyrimidine. 2-[(2R,5Z)-2-carboxy-4-methylthiazol-5(2H)-ylidene]ethyl phosphate is bound at residue glycine 304.

Belongs to the thiamine-phosphate synthase family. The cofactor is Mg(2+).

The enzyme catalyses 2-[(2R,5Z)-2-carboxy-4-methylthiazol-5(2H)-ylidene]ethyl phosphate + 4-amino-2-methyl-5-(diphosphooxymethyl)pyrimidine + 2 H(+) = thiamine phosphate + CO2 + diphosphate. It catalyses the reaction 2-(2-carboxy-4-methylthiazol-5-yl)ethyl phosphate + 4-amino-2-methyl-5-(diphosphooxymethyl)pyrimidine + 2 H(+) = thiamine phosphate + CO2 + diphosphate. The catalysed reaction is 4-methyl-5-(2-phosphooxyethyl)-thiazole + 4-amino-2-methyl-5-(diphosphooxymethyl)pyrimidine + H(+) = thiamine phosphate + diphosphate. Its pathway is cofactor biosynthesis; thiamine diphosphate biosynthesis; thiamine phosphate from 4-amino-2-methyl-5-diphosphomethylpyrimidine and 4-methyl-5-(2-phosphoethyl)-thiazole: step 1/1. Its function is as follows. Condenses 4-methyl-5-(beta-hydroxyethyl)thiazole monophosphate (THZ-P) and 2-methyl-4-amino-5-hydroxymethyl pyrimidine pyrophosphate (HMP-PP) to form thiamine monophosphate (TMP). The chain is Thiamine-phosphate synthase from Parasynechococcus marenigrum (strain WH8102).